The chain runs to 111 residues: MYLTITRPDLTFAVNRLSQFSSASRTAQMQAVYKVLHYVKGTVGQGLFYSATSDLQLKAFADSDWASCPDTRRSVTGFCSLVPLWFLGALRKSILSPGLLQRQNIEALHLL.

It localises to the mitochondrion. This is an uncharacterized protein from Arabidopsis thaliana (Mouse-ear cress).